The following is a 293-amino-acid chain: Ribulose bisphosphate carboxylase/oxygenase activase, chloroplastic (293 aa).

75–82 is a binding site for ATP; that stretch reads PGTGKTTV.

The protein belongs to the CbxX/CfxQ family. Forms homooligomers. Forms heterohexameric rings with the nuclear-encoded Rca subunit consisting of 3 of each nuclear- and plastidial-encoded subunits that alternate in the ring.

The protein localises to the plastid. It is found in the chloroplast. Its function is as follows. Required for the expression of ribulose 1,5-bisphosphate carboxylase/oxygenase (RuBisCo). ATPase involved in the activation of red-type RuBisCo, which tends to form inactive complexes with its substrate ribulose 1,5-bisphosphate (RuBP). Catalyzes the release of RuBP from inhibited RuBisCo in an ATP-dependent manner. Activation of RuBisCO involves the ATP-dependent carboxylation of the epsilon-amino group of lysine leading to a carbamate structure. The nuclear-encoded subunit plays a more critical role in activase function than the plastidial-encoded subunit. This is Ribulose bisphosphate carboxylase/oxygenase activase, chloroplastic from Cyanidioschyzon merolae (strain NIES-3377 / 10D) (Unicellular red alga).